Reading from the N-terminus, the 1336-residue chain is SH3 domain and tetratricopeptide repeat-containing protein 1 (1336 aa).

Position 1 is an N-acetylmethionine (Met-1). Disordered stretches follow at residues 1–76 and 225–266; these read MENL…PPCQ and TGPR…SEEV. Residues 18–27 are compositionally biased toward gly residues; it reads GPVGPSGGGS. The span at 46–61 shows a compositional bias: basic and acidic residues; sequence AGPEEAKAPVRGDEAP. Low complexity-rich tracts occupy residues 62-74 and 247-266; these read PARV…GTPP and EAAP…SEEV. The 64-residue stretch at 305–368 folds into the SH3 domain; sequence MAVGLASALA…RSSLISMQGP (64 aa). TPR repeat units follow at residues 560-593, 601-634, 665-698, 786-819, 863-896, 946-979, 1027-1063, and 1192-1225; these read ARLC…LEGS, VAVY…LLGT, ARAC…HRDS, GPLY…SAIA, GVIA…ARDL, THVL…AVEM, GQLL…FIDL, and RVAY…CNSP. Tyr-1248 carries the phosphotyrosine modification. Residues 1277-1311 form a TPR 9 repeat; sequence LKIYTRLATIYHNFLLDREKSLFFYQKARTFATEL.

This Homo sapiens (Human) protein is SH3 domain and tetratricopeptide repeat-containing protein 1 (SH3TC1).